Here is a 608-residue protein sequence, read N- to C-terminus: Serine/threonine-protein kinase BUR1 (608 aa).

The 308-residue stretch at 39 to 346 folds into the Protein kinase domain; sequence YEIIQKLGQG…ALDALNHNYF (308 aa). Residues 45–53 and Lys-68 contribute to the ATP site; that span reads LGQGTFGVV. Catalysis depends on Asp-174, which acts as the Proton acceptor. Disordered regions lie at residues 383–419 and 443–571; these read HEANKIPKAHFPKGPGEYNNSNNYPRNRNGSFPLALP and YIPK…FDED. Residues 400–411 show a composition bias toward low complexity; the sequence is YNNSNNYPRNRN. Basic and acidic residues predominate over residues 471-482; sequence LRDRSPRREGHI. Low complexity predominate over residues 487–502; the sequence is STTNSNNISSNSSASN. Polar residues-rich tracts occupy residues 503 to 512 and 539 to 548; these read VGGTLSNPTH and PQSSSRNVSD. Residues 559 to 571 show a composition bias toward acidic residues; it reads EQNESDLTDFDED.

Belongs to the protein kinase superfamily. CMGC Ser/Thr protein kinase family. CDC2/CDKX subfamily.

It localises to the nucleus. It carries out the reaction L-seryl-[protein] + ATP = O-phospho-L-seryl-[protein] + ADP + H(+). The catalysed reaction is L-threonyl-[protein] + ATP = O-phospho-L-threonyl-[protein] + ADP + H(+). It catalyses the reaction [DNA-directed RNA polymerase] + ATP = phospho-[DNA-directed RNA polymerase] + ADP + H(+). Functionally, serine/threonine-protein kinase involved in transcription regulation. Phosphorylates the UBC2/RAD6 ubiquitin-conjugating enzyme (E2), leading to monoubiquitination of histone H2B and the silencing of telomeric-associated genes. Also required for histone H3 methylation. Necessary for the recovery from pheromone-induced growth arrest in the cell cycle G1 phase. The protein is Serine/threonine-protein kinase BUR1 (BUR1) of Debaryomyces hansenii (strain ATCC 36239 / CBS 767 / BCRC 21394 / JCM 1990 / NBRC 0083 / IGC 2968) (Yeast).